A 372-amino-acid polypeptide reads, in one-letter code: Alpha-L-fucosidase 3 (372 aa).

Positions 1–23 (MNPILSSLFALSLLSSLSPSTHA) are cleaved as a signal peptide. Catalysis depends on S37, which acts as the Nucleophile. 4 N-linked (GlcNAc...) asparagine glycosylation sites follow: N96, N114, N139, and N182. Residues D345 and H348 contribute to the active site.

Belongs to the 'GDSL' lipolytic enzyme family. In terms of tissue distribution, high expression in younger leaves and in the apical region of the inflorescence stem.

Its subcellular location is the secreted. It is found in the extracellular space. It localises to the apoplast. The catalysed reaction is an alpha-L-fucoside + H2O = L-fucose + an alcohol. Hydrolyzes alpha-1,2-linked fucose. Also active on fucosylated xyloglucan oligosaccharides. This Arabidopsis thaliana (Mouse-ear cress) protein is Alpha-L-fucosidase 3 (FXG1).